The following is a 357-amino-acid chain: Protein-L-isoaspartate O-methyltransferase domain-containing protein 1 (357 aa).

Residue Gly2 is the site of N-myristoyl glycine attachment. The active site involves Ser64. AdoMet binding motif regions lie at residues 85–94, 160–164, and 181–191; these read LNLGSGTGYL, YDRIY, and LKVGGILVMPI. The interval 240–250 is BC-box; the sequence is VRNLQDLARIY. Residues 299-331 are disordered; the sequence is PLDSEEDEKMEEDSKEEEEKEHIEAMKREEPPQ. A compositionally biased stretch (acidic residues) spans 301 to 317; sequence DSEEDEKMEEDSKEEEE. Residues 318–331 are compositionally biased toward basic and acidic residues; sequence KEHIEAMKREEPPQ. Positions 341–344 are CUL-box; it reads LPLP.

Belongs to the methyltransferase superfamily. L-isoaspartyl/D-aspartyl protein methyltransferase family. In terms of assembly, component of the probable ECS(PCMTD1) E3 ubiquitin-protein ligase complex, at least composed of CUL5, ELOB, ELOC, RBX2 and PCMTD1. Interacts (via the BC-box) with ELOB and ELOC; the interaction is direct and stabilizes PCMTD1.

Its subcellular location is the cytoplasm. The protein localises to the membrane. Functionally, substrate recognition component of an ECS (Elongin BC-CUL5-SOCS-box protein) E3 ubiquitin ligase complex which mediates the ubiquitination and subsequent proteasomal degradation of target proteins. Specifically binds to the methyltransferase cofactor S-adenosylmethionine (AdoMet) via the N-terminal AdoMet binding motif, but does not display methyltransferase activity. May provide an alternate maintenance pathway for modified proteins by acting as a damage-specific E3 ubiquitin ligase adaptor protein. This chain is Protein-L-isoaspartate O-methyltransferase domain-containing protein 1 (Pcmtd1), found in Mus musculus (Mouse).